A 106-amino-acid polypeptide reads, in one-letter code: MMATGTADSQARFGQSVKGLLTEKVTTCGTDVIALTKQVLKGSRSSELLGQAARNMVLQEDAILHSEDSLRKMAIITTHLQYQQEAIQKNVEQSSDLQDQLNHLLK.

It belongs to the BORCS7 family. As to quaternary structure, component of the BLOC-one-related complex (BORC) which is composed of BLOC1S1, BLOC1S2, BORCS5, BORCS6, BORCS7, BORCS8, KXD1 and SNAPIN.

Its subcellular location is the lysosome membrane. In terms of biological role, as part of the BORC complex may play a role in lysosomes movement and localization at the cell periphery. Associated with the cytosolic face of lysosomes, the BORC complex may recruit ARL8B and couple lysosomes to microtubule plus-end-directed kinesin motor. The polypeptide is BLOC-1-related complex subunit 7 (Pongo abelii (Sumatran orangutan)).